The chain runs to 518 residues: Subtilisin-like protease 1 (518 aa).

Positions 1–19 (MGVFRFISISLAAVSAANA) are cleaved as a signal peptide. Residues 20–116 (AQILSMPHAQ…VEPDTIISVH (97 aa)) constitute a propeptide that is removed on maturation. Residues 34 to 115 (SYIVMMKDDT…FVEPDTIISV (82 aa)) form the Inhibitor I9 domain. Positions 126 to 400 (SWGLARISNP…NVLINNGGAK (275 aa)) constitute a Peptidase S8 domain. Residues D158 and H190 each act as charge relay system in the active site. Residues 175–198 (GSNQVNDGDDRDGSGHGTHTSGTM) are disordered. 2 N-linked (GlcNAc...) asparagine glycosylation sites follow: N233 and N251. Polar residues predominate over residues 282–294 (NDNQDAQSSSPAS). The interval 282–312 (NDNQDAQSSSPASEPSVCTVGSSAEDDSRSS) is disordered. S345 (charge relay system) is an active-site residue. Positions 378 to 394 (TSSITDAGPGTPTNVLI) are enriched in polar residues. A disordered region spans residues 378–496 (TSSITDAGPG…PYPGGDNFDF (119 aa)). 2 stretches are compositionally biased toward pro residues: residues 405-470 (NPNP…PGEP) and 478-487 (APAPQHPHTP).

The protein belongs to the peptidase S8 family.

It localises to the secreted. Functionally, secreted subtilisin-like serine protease with keratinolytic activity that contributes to pathogenicity. This is Subtilisin-like protease 1 (SUB1) from Trichophyton verrucosum (strain HKI 0517).